We begin with the raw amino-acid sequence, 267 residues long: Hydroxyacylglutathione hydrolase (267 aa).

Positions 55, 57, 59, 60, 121, 138, and 176 each coordinate Zn(2+).

Belongs to the metallo-beta-lactamase superfamily. Glyoxalase II family. In terms of assembly, monomer. The cofactor is Zn(2+).

The enzyme catalyses an S-(2-hydroxyacyl)glutathione + H2O = a 2-hydroxy carboxylate + glutathione + H(+). It functions in the pathway secondary metabolite metabolism; methylglyoxal degradation; (R)-lactate from methylglyoxal: step 2/2. Its function is as follows. Thiolesterase that catalyzes the hydrolysis of S-D-lactoyl-glutathione to form glutathione and D-lactic acid. In Shewanella sp. (strain ANA-3), this protein is Hydroxyacylglutathione hydrolase.